A 1064-amino-acid chain; its full sequence is Valine--tRNA ligase, mitochondrial (1064 aa).

The N-terminal 26 residues, 1–26 (MPHLPLASFRPPFWGLRHSRGLPRFH), are a transit peptide targeting the mitochondrion. The segment at 25 to 65 (FHSVSTQSEPHGSPISRRNREAKQKRLREKQATLETDIAGE) is disordered. A compositionally biased stretch (basic and acidic residues) spans 42–56 (RNREAKQKRLREKQA). Positions 146–156 (PNVTGSLHIGH) match the 'HIGH' region motif. The 'KMSKS' region motif lies at 659 to 663 (KMSKS). Residue Lys662 coordinates ATP.

The protein belongs to the class-I aminoacyl-tRNA synthetase family.

Its subcellular location is the mitochondrion. The enzyme catalyses tRNA(Val) + L-valine + ATP = L-valyl-tRNA(Val) + AMP + diphosphate. Its function is as follows. Catalyzes the attachment of valine to tRNA(Val) in a two-step reaction: valine is first activated by ATP to form Val-AMP and then transferred to the acceptor end of tRNA(Val). The polypeptide is Valine--tRNA ligase, mitochondrial (VARS2) (Macaca mulatta (Rhesus macaque)).